A 1413-amino-acid chain; its full sequence is Sushi, nidogen and EGF-like domain-containing protein 1 (1413 aa).

An N-terminal signal peptide occupies residues 1-24; it reads MRHGVAWALLVAAALGLGARGVRG. The NIDO domain occupies 103 to 258; it reads AFWADVDNRR…GRWAFRIDDA (156 aa). 2 N-linked (GlcNAc...) asparagine glycosylation sites follow: Asn-145 and Asn-204. EGF-like domains lie at 268 to 309, 311 to 347, and 349 to 385; these read TTSV…RRCH, DVNE…PTCE, and AQSP…AACE. Cystine bridges form between Cys-272-Cys-284, Cys-278-Cys-297, Cys-299-Cys-308, Cys-315-Cys-326, Cys-320-Cys-335, Cys-337-Cys-346, Cys-353-Cys-364, Cys-358-Cys-373, Cys-375-Cys-384, Cys-391-Cys-402, Cys-396-Cys-411, Cys-413-Cys-422, Cys-433-Cys-444, Cys-438-Cys-453, Cys-455-Cys-464, Cys-472-Cys-480, Cys-474-Cys-488, and Cys-490-Cys-499. N-linked (GlcNAc...) asparagine glycosylation is present at Asn-292. Positions 352 to 374 constitute a Follistatin-like 1 domain; that stretch reads PCDTKECQHGGQCQVENGSAVCV. Asn-368 is a glycosylation site (N-linked (GlcNAc...) asparagine). The EGF-like 4; calcium-binding domain maps to 387–423; the sequence is DVDDCSPDPCLNGGSCVDLVGNYTCLCAEPFKGLRCE. Asn-408 is a glycosylation site (N-linked (GlcNAc...) asparagine). EGF-like domains are found at residues 429 to 465 and 468 to 500; these read VPDA…LDCR and VPDD…LLCE. Asn-484 carries N-linked (GlcNAc...) asparagine glycosylation. Positions 507 to 530 constitute a Follistatin-like 2 domain; sequence PCNMNTQCPDGGYCMEHGGSYLCV. Residue Asn-536 is glycosylated (N-linked (GlcNAc...) asparagine). EGF-like domains lie at 541-577, 580-616, 619-655, and 657-693; these read LPSP…KHCE, RPHL…RHCE, KPDS…RHCE, and APSP…RRCQ. 26 disulfides stabilise this stretch: Cys-545–Cys-556, Cys-550–Cys-565, Cys-567–Cys-576, Cys-584–Cys-595, Cys-589–Cys-604, Cys-606–Cys-615, Cys-623–Cys-634, Cys-628–Cys-643, Cys-645–Cys-654, Cys-661–Cys-672, Cys-666–Cys-681, Cys-683–Cys-692, Cys-698–Cys-739, Cys-724–Cys-751, Cys-757–Cys-768, Cys-762–Cys-777, Cys-779–Cys-788, Cys-795–Cys-806, Cys-800–Cys-815, Cys-817–Cys-826, Cys-833–Cys-844, Cys-838–Cys-853, Cys-855–Cys-864, Cys-871–Cys-882, Cys-876–Cys-891, and Cys-893–Cys-902. Residues 696-753 form the Sushi domain; that stretch reads VDCGPPEEVKHATLRFNGTRLGAVALYACDRGYSLSAPSRIRVCQPHGVWSEPPQCLE. N-linked (GlcNAc...) asparagine glycosylation is present at Asn-712. Residues 753–789 enclose the EGF-like 11; calcium-binding domain; that stretch reads EIDECRSQPCLHGGSCQDRVAGYLCLCSTGYEGAHCE. The 37-residue stretch at 791 to 827 folds into the EGF-like 12; calcium-binding domain; sequence ERDECRAHPCRNGGSCRNLPGAYVCRCPAGFVGVHCE. EGF-like domains are found at residues 829-865 and 867-903; these read EVDA…YHCE and VSDP…EDCA. An N-linked (GlcNAc...) asparagine glycan is attached at Asn-886. 3 Fibronectin type-III domains span residues 908-1006, 1007-1105, and 1106-1200; these read PPTA…TRPR, PVEG…TRPL, and PPAN…SPRD. 4 N-linked (GlcNAc...) asparagine glycosylation sites follow: Asn-977, Asn-1015, Asn-1109, and Asn-1139. A disordered region spans residues 1206–1226; the sequence is WHQGGHHPRVLKNRPPPARLP. Positions 1207–1217 are enriched in basic residues; sequence HQGGHHPRVLK. The EGF-like 15 domain occupies 1307–1343; that stretch reads VPGNCSENPCQNGGTCVPGADAHSCDCGPGFKGRRCE. Asn-1310 is a glycosylation site (N-linked (GlcNAc...) asparagine). 3 disulfides stabilise this stretch: Cys-1311-Cys-1322, Cys-1316-Cys-1331, and Cys-1333-Cys-1342. Residues 1394-1413 are disordered; sequence TSLKKTPNRKQSKSQTLEKS.

Post-translationally, phosphorylated on serine and threonine residues. N-glycosylated.

The protein resides in the secreted. The protein localises to the extracellular space. Its subcellular location is the extracellular matrix. The sequence is that of Sushi, nidogen and EGF-like domain-containing protein 1 from Homo sapiens (Human).